A 206-amino-acid polypeptide reads, in one-letter code: N-(5'-phosphoribosyl)anthranilate isomerase (206 aa).

This sequence belongs to the TrpF family.

The enzyme catalyses N-(5-phospho-beta-D-ribosyl)anthranilate = 1-(2-carboxyphenylamino)-1-deoxy-D-ribulose 5-phosphate. The protein operates within amino-acid biosynthesis; L-tryptophan biosynthesis; L-tryptophan from chorismate: step 3/5. The sequence is that of N-(5'-phosphoribosyl)anthranilate isomerase from Chlamydia caviae (strain ATCC VR-813 / DSM 19441 / 03DC25 / GPIC) (Chlamydophila caviae).